A 319-amino-acid polypeptide reads, in one-letter code: Transcription factor STKL2 (319 aa).

The disordered stretch occupies residues 1-119; the sequence is MAPLESPATA…NKKANPQRVW (119 aa). The span at 21-34 shows a compositional bias: basic and acidic residues; that stretch reads EIFKSSSEESKPKD. Residues 38-55 are compositionally biased toward polar residues; that stretch reads VPSSKTLKSPSAAVNSKT. Residues 89-112 show a composition bias toward basic and acidic residues; the sequence is RAGEGSTSRDMHVKRVKKEDDNKK.

This sequence belongs to the GeBP family. As to expression, expressed strongly in leaves and flowers, weakly in roots, and very weakly in stems.

It is found in the nucleus. Transcription repressor that binds DNA in a sequence-specific manner, 5'-GCCT-3', to regulate the expression of PGR. Acts as a modulatory component for the glucose-triggered developmental leaf growth process. The protein is Transcription factor STKL2 of Arabidopsis thaliana (Mouse-ear cress).